Consider the following 581-residue polypeptide: MLKKNFSTWRIFCRLWPIISPFKSGLIISIVALIINATSDTLMLSLLKPLLDNGFKSSENKISIWMPLAIVALMLSRGSSGFISSYFISWVSGKVVMNIRRNLFRHMMNMPVSFFDKRSTGALLSRITYDTEQVASSSSSVLITIVREGSLIIGLFFMMFFHSWKLSSVLIIITPIVFFSINQVSKRFRKINKKIQNNMGQVNFIVEQMLKGHKEIRIFGGQKEEIDRFNYVSNFIRQQSMKIVISSSTLDIIIQFISSITLAVILYISSLPKIIDELTAGTITVIFTSMIALMRPLKSLTNVNANFQKGMVACKTLFSIFDIKQEQDIGKCYINRARGEIKFKNITFTYPGKENPSLKDINIKISAGCTVALIGSSGAGKSTIVNLLTRFYEADKGSIFLDNINLKKYKLSNLRNQIALVSQNIYLFNDTIANNIAYAKKKIYSKYQIEKAAYMAYAMDFIIKMKHGLNTIIGENGTLLSGGQRQRIAIARALLRDCPILILDEATSALDIESEIKVQKAIDKIRKNRTSLVIAHRISTIKKSDMILLVEKGKIIEYGNHNELIEKKGVYAQIYRLQLDQ.

The next 5 helical transmembrane spans lie at 15-35 (LWPI…ALII), 62-82 (ISIW…SSGF), 152-172 (IIGL…VLII), 252-272 (IIIQ…SSLP), and 274-294 (IIDE…IALM). Positions 27–309 (IISIVALIIN…LTNVNANFQK (283 aa)) constitute an ABC transmembrane type-1 domain. Residues 341 to 577 (IKFKNITFTY…KGVYAQIYRL (237 aa)) enclose the ABC transporter domain. 375-382 (GSSGAGKS) is an ATP binding site.

Belongs to the ABC transporter superfamily. Lipid exporter (TC 3.A.1.106) family. Homodimer.

The protein resides in the cell membrane. It catalyses the reaction ATP + H2O + lipid A-core oligosaccharideSide 1 = ADP + phosphate + lipid A-core oligosaccharideSide 2.. Functionally, involved in lipopolysaccharide (LPS) biosynthesis. Translocates lipid A-core from the inner to the outer leaflet of the inner membrane. Transmembrane domains (TMD) form a pore in the inner membrane and the ATP-binding domain (NBD) is responsible for energy generation. This chain is ATP-dependent lipid A-core flippase, found in Wigglesworthia glossinidia brevipalpis.